We begin with the raw amino-acid sequence, 237 residues long: Glutathione S-transferase L1 (237 aa).

Residues G29–S110 enclose the GST N-terminal domain. Residues C39–P40, N67–R68, K81–V82, and E94–S95 each bind glutathione. Residues Y112–Y232 enclose the GST C-terminal domain.

This sequence belongs to the GST superfamily. Lambda family.

It localises to the cytoplasm. The protein localises to the cytosol. It catalyses the reaction RX + glutathione = an S-substituted glutathione + a halide anion + H(+). In terms of biological role, catalyzes the glutathione-dependent reduction of S-glutathionylquercetin to quercetin. In vitro, possesses glutathione-dependent thiol transferase activity toward 2-hydroxyethyl disulfide (HED). This is Glutathione S-transferase L1 (GSTL1) from Arabidopsis thaliana (Mouse-ear cress).